Reading from the N-terminus, the 328-residue chain is Probable nicotianamine synthase 6 (328 aa).

It belongs to the nicotianamine synthase (NAS)-like family.

The enzyme catalyses 3 S-adenosyl-L-methionine = nicotianamine + 3 S-methyl-5'-thioadenosine + 3 H(+). Synthesizes nicotianamine, a polyamine that is the first intermediate in the synthesis of the phytosiderophores of the mugineic acid type found in gramineae which serves as a sensor for the physiological iron status within the plant, and/or might be involved in the transport of iron. In Hordeum vulgare (Barley), this protein is Probable nicotianamine synthase 6 (NAS6).